The sequence spans 571 residues: Adenine deaminase (571 aa).

This sequence belongs to the metallo-dependent hydrolases superfamily. Adenine deaminase family. Requires Mn(2+) as cofactor.

It carries out the reaction adenine + H2O + H(+) = hypoxanthine + NH4(+). The protein is Adenine deaminase of Dehalococcoides mccartyi (strain CBDB1).